Here is a 160-residue protein sequence, read N- to C-terminus: Large ribosomal subunit protein eL21 (160 aa).

Basic and acidic residues-rich tracts occupy residues 112–123 (NDQKKKEAKEKG) and 136–145 (REAHFVRTNG). The interval 112–145 (NDQKKKEAKEKGTWVQLKRQPAPPREAHFVRTNG) is disordered.

The protein belongs to the eukaryotic ribosomal protein eL21 family. As to quaternary structure, component of the large ribosomal subunit.

It localises to the cytoplasm. The protein resides in the cytosol. The protein localises to the endoplasmic reticulum. Component of the large ribosomal subunit. The ribosome is a large ribonucleoprotein complex responsible for the synthesis of proteins in the cell. The protein is Large ribosomal subunit protein eL21 of Mus musculus (Mouse).